Consider the following 581-residue polypeptide: Arginine--tRNA ligase (581 aa).

Residues 126–136 carry the 'HIGH' region motif; the sequence is PNLAKEMHVGH.

This sequence belongs to the class-I aminoacyl-tRNA synthetase family. As to quaternary structure, monomer.

It is found in the cytoplasm. It carries out the reaction tRNA(Arg) + L-arginine + ATP = L-arginyl-tRNA(Arg) + AMP + diphosphate. The chain is Arginine--tRNA ligase from Shewanella baltica (strain OS155 / ATCC BAA-1091).